The sequence spans 358 residues: GTPase Obg (358 aa).

An Obg domain is found at 1–159 (MKFLDEAKVY…RWIWLRLKLI (159 aa)). In terms of domain architecture, OBG-type G spans 160 to 327 (ADAGLVGLPN…VLRALVEVIG (168 aa)). Residues 166–173 (GLPNAGKS), 191–195 (FTTLH), 212–215 (DIPG), 279–282 (NKID), and 308–310 (SGV) contribute to the GTP site. Mg(2+)-binding residues include Ser-173 and Thr-193. Residues 335–358 (AKGADASAAQAMETPVARAKPWSP) are disordered.

This sequence belongs to the TRAFAC class OBG-HflX-like GTPase superfamily. OBG GTPase family. As to quaternary structure, monomer. Mg(2+) serves as cofactor.

It localises to the cytoplasm. Functionally, an essential GTPase which binds GTP, GDP and possibly (p)ppGpp with moderate affinity, with high nucleotide exchange rates and a fairly low GTP hydrolysis rate. Plays a role in control of the cell cycle, stress response, ribosome biogenesis and in those bacteria that undergo differentiation, in morphogenesis control. The protein is GTPase Obg of Nitrobacter winogradskyi (strain ATCC 25391 / DSM 10237 / CIP 104748 / NCIMB 11846 / Nb-255).